Consider the following 290-residue polypeptide: Beta-lactamase OXY-2 (290 aa).

The signal sequence occupies residues 1–27; the sequence is MIKSSWRKIAMLAAAVPLLLASGALWA. Residue Ser-72 is the Acyl-ester intermediate of the active site. 236-238 serves as a coordination point for substrate; that stretch reads KTG.

It belongs to the class-A beta-lactamase family.

It catalyses the reaction a beta-lactam + H2O = a substituted beta-amino acid. In terms of biological role, hydrolyzes broad-spectrum beta-lactam antibiotics. Active against all third-generation cephalosporins but ceftazidime. This is Beta-lactamase OXY-2 (bla) from Klebsiella oxytoca.